Here is a 197-residue protein sequence, read N- to C-terminus: Nucleoid occlusion factor SlmA (197 aa).

Residues 7 to 67 (INRREHILQC…GLIDFIEESL (61 aa)) form the HTH tetR-type domain. Residues 30–49 (TTAKLAAEVGVSEAALYRHF) constitute a DNA-binding region (H-T-H motif).

This sequence belongs to the nucleoid occlusion factor SlmA family. In terms of assembly, homodimer. Interacts with FtsZ.

It is found in the cytoplasm. It localises to the nucleoid. Its function is as follows. Required for nucleoid occlusion (NO) phenomenon, which prevents Z-ring formation and cell division over the nucleoid. Acts as a DNA-associated cell division inhibitor that binds simultaneously chromosomal DNA and FtsZ, and disrupts the assembly of FtsZ polymers. SlmA-DNA-binding sequences (SBS) are dispersed on non-Ter regions of the chromosome, preventing FtsZ polymerization at these regions. In Shewanella woodyi (strain ATCC 51908 / MS32), this protein is Nucleoid occlusion factor SlmA.